The sequence spans 682 residues: MLSSITVRTKSGRLIPLVLAATLLAACSGRISTTPPAPVQSEATASADYYLQQMQQSSDDSKADWQLLAIRALLREGKLPQADDLLGQLPSQLTEAQQLEQRLVSAELEIARHAPQQAQAILSKLDISLLSQAQQLRYYQAVIAAVQGKTTLAQIRAYIALQPLLTQENQRKSNIDATWTALNTLTPADLNSMVINANEDILRGWLDLLRLYQDNRQDPALLKAAIKEWQTRYPNNPAATMLPSALDNILHLQSDSTASIALLLPLNGQAKVFSDAIEAGFNAAKNGAFNQNSAAVTTDGTPTAQVDAPAQPDVNAAGAVSTSTQSADATASVLPADSAALPPLDAAGDPIAPSVSPGNPDAHIQVYDTSSQPLPELLSQAQQAGVSLVIGPLLKNNVDQLNTISTPLNILALNQPEQVQNHPNICYFALSPEDEARDAARHIWAQGKRTPLLLIPRNPLGDRVAKAFATEWQSLGGGSVLRQTFGSSAELRSTINSGTGIRLTGQPVSITPAQPTSVTIAGLTIPAPVQPPVASGGGVDAVYIIATPAEITLIKPMIDLANGTHNGISLYASSRSYQAGAGPDFRLEMEGVQFSDIPLLAGSDPAILQQAPAQYRNDYSLMRLYAMGADAWTLANHFAQLRQIPGFQVQGATGTLSASDNCVIQRKLPWLQYQKGSIVPVL.

A signal peptide spans 1–26 (MLSSITVRTKSGRLIPLVLAATLLAA). Cys-27 carries N-palmitoyl cysteine lipidation. Residue Cys-27 is the site of S-diacylglycerol cysteine attachment.

The protein belongs to the LpoA family. In terms of assembly, interacts with PBP1a.

Its subcellular location is the cell outer membrane. Functionally, regulator of peptidoglycan synthesis that is essential for the function of penicillin-binding protein 1A (PBP1a). The chain is Penicillin-binding protein activator LpoA from Edwardsiella ictaluri (strain 93-146).